The primary structure comprises 867 residues: Translation initiation factor IF-2 (867 aa).

The region spanning 367 to 534 is the tr-type G domain; sequence TRAPVVTIMG…AILLQSEILE (168 aa). The interval 376-383 is G1; it reads GHVDHGKT. Residue 376–383 coordinates GTP; sequence GHVDHGKT. The segment at 401–405 is G2; that stretch reads GITQN. The tract at residues 422 to 425 is G3; it reads DTPG. Residues 422 to 426 and 476 to 479 each bind GTP; these read DTPGH and NKID. The G4 stretch occupies residues 476 to 479; it reads NKID. Residues 512–514 are G5; the sequence is SAK.

The protein belongs to the TRAFAC class translation factor GTPase superfamily. Classic translation factor GTPase family. IF-2 subfamily.

Its subcellular location is the cytoplasm. Its function is as follows. One of the essential components for the initiation of protein synthesis. Protects formylmethionyl-tRNA from spontaneous hydrolysis and promotes its binding to the 30S ribosomal subunits. Also involved in the hydrolysis of GTP during the formation of the 70S ribosomal complex. This chain is Translation initiation factor IF-2, found in Buchnera aphidicola subsp. Schizaphis graminum (strain Sg).